The following is a 331-amino-acid chain: tRNA N6-adenosine threonylcarbamoyltransferase (331 aa).

Fe cation is bound by residues His109, His113, and Tyr130. Substrate is bound by residues 130-134, Asp162, Asp183, and Ser262; that span reads YLSGG. Residue Asp290 participates in Fe cation binding.

This sequence belongs to the KAE1 / TsaD family. The cofactor is Fe(2+).

It localises to the cytoplasm. It carries out the reaction L-threonylcarbamoyladenylate + adenosine(37) in tRNA = N(6)-L-threonylcarbamoyladenosine(37) in tRNA + AMP + H(+). Its function is as follows. Required for the formation of a threonylcarbamoyl group on adenosine at position 37 (t(6)A37) in tRNAs that read codons beginning with adenine. Is probably involved in the transfer of the threonylcarbamoyl moiety of threonylcarbamoyl-AMP (TC-AMP) to the N6 group of A37. The polypeptide is tRNA N6-adenosine threonylcarbamoyltransferase (Saccharolobus islandicus (strain M.16.27) (Sulfolobus islandicus)).